A 394-amino-acid polypeptide reads, in one-letter code: Elongation factor Tu (394 aa).

The region spanning 10 to 204 (KPHVNVGTIG…ALDTYIPEPE (195 aa)) is the tr-type G domain. Residues 19-26 (GHVDHGKT) are G1. 19-26 (GHVDHGKT) contributes to the GTP binding site. Thr-26 serves as a coordination point for Mg(2+). The segment at 60-64 (GITIN) is G2. The G3 stretch occupies residues 81–84 (DCPG). GTP-binding positions include 81 to 85 (DCPGH) and 136 to 139 (NKCD). Positions 136–139 (NKCD) are G4. The segment at 174 to 176 (SAL) is G5.

Belongs to the TRAFAC class translation factor GTPase superfamily. Classic translation factor GTPase family. EF-Tu/EF-1A subfamily. As to quaternary structure, monomer.

It is found in the cytoplasm. It catalyses the reaction GTP + H2O = GDP + phosphate + H(+). In terms of biological role, GTP hydrolase that promotes the GTP-dependent binding of aminoacyl-tRNA to the A-site of ribosomes during protein biosynthesis. This Shewanella sediminis (strain HAW-EB3) protein is Elongation factor Tu.